A 72-amino-acid polypeptide reads, in one-letter code: UPF0154 protein Bcer98_2334 (72 aa).

A helical membrane pass occupies residues 3–23; that stretch reads IWSGILVGVVALLAGVALGFF.

Belongs to the UPF0154 family.

Its subcellular location is the cell membrane. The polypeptide is UPF0154 protein Bcer98_2334 (Bacillus cytotoxicus (strain DSM 22905 / CIP 110041 / 391-98 / NVH 391-98)).